A 308-amino-acid chain; its full sequence is HTH-type transcriptional regulator YtlI (308 aa).

An HTH lysR-type domain is found at 1-57 (MELRSIKTFHTIVKFGSFYKAAEILNYSQPTISMRMKQLEQDLGVLLFERGKSLQLT). Positions 18–37 (FYKAAEILNYSQPTISMRMK) form a DNA-binding region, H-T-H motif.

This sequence belongs to the LysR transcriptional regulatory family.

Functionally, positively regulates the expression of ytmI operon in response to the availability of sulfur sources. The polypeptide is HTH-type transcriptional regulator YtlI (ytlI) (Bacillus subtilis (strain 168)).